The following is an 84-amino-acid chain: Large ribosomal subunit protein eL34 (84 aa).

The protein belongs to the eukaryotic ribosomal protein eL34 family.

The polypeptide is Large ribosomal subunit protein eL34 (Pyrobaculum islandicum (strain DSM 4184 / JCM 9189 / GEO3)).